The following is a 129-amino-acid chain: Protein RfbJ (129 aa).

Belongs to the glycosyltransferase 2 family.

It participates in bacterial outer membrane biogenesis; lipopolysaccharide biosynthesis. The polypeptide is Protein RfbJ (rfbJ) (Shigella flexneri).